A 533-amino-acid chain; its full sequence is Bifunctional purine biosynthesis protein PurH (533 aa).

Positions methionine 1 to valine 148 constitute an MGS-like domain.

This sequence belongs to the PurH family.

The catalysed reaction is (6R)-10-formyltetrahydrofolate + 5-amino-1-(5-phospho-beta-D-ribosyl)imidazole-4-carboxamide = 5-formamido-1-(5-phospho-D-ribosyl)imidazole-4-carboxamide + (6S)-5,6,7,8-tetrahydrofolate. It carries out the reaction IMP + H2O = 5-formamido-1-(5-phospho-D-ribosyl)imidazole-4-carboxamide. The protein operates within purine metabolism; IMP biosynthesis via de novo pathway; 5-formamido-1-(5-phospho-D-ribosyl)imidazole-4-carboxamide from 5-amino-1-(5-phospho-D-ribosyl)imidazole-4-carboxamide (10-formyl THF route): step 1/1. It functions in the pathway purine metabolism; IMP biosynthesis via de novo pathway; IMP from 5-formamido-1-(5-phospho-D-ribosyl)imidazole-4-carboxamide: step 1/1. In Pasteurella multocida (strain Pm70), this protein is Bifunctional purine biosynthesis protein PurH.